The chain runs to 747 residues: Zinc finger and BTB domain-containing protein 47 (747 aa).

The BTB domain maps to 15-83 (CDVDLVLVPQ…IYTSKLLVNA (69 aa)). Residue Lys190 forms a Glycyl lysine isopeptide (Lys-Gly) (interchain with G-Cter in SUMO2) linkage. The disordered stretch occupies residues 243-424 (QTLHVSTGPE…ARGPPATDGL (182 aa)). Residues 267–277 (GREDGLQRHSD) show a composition bias toward basic and acidic residues. Residues 278-354 (EEEEDDEEEE…SEEEEGEEGE (77 aa)) show a composition bias toward acidic residues. Positions 380–398 (RSRENARRRGTPEPEEAGR) are enriched in basic and acidic residues. The C2H2-type 1 zinc-finger motif lies at 436–459 (HPCQKCPRVFNNRWYLEKHMNVTH). Residues 463-485 (QICDQCGKRFLLESELLLHRQTD) form a C2H2-type 2; degenerate zinc finger. C2H2-type zinc fingers lie at residues 490–513 (IQCVTCGKAFKKLWSLHEHNKIVH), 520–542 (FSCEICEKKFYTMAHVRKHMVAH), 548–570 (FTCETCGKSFKRSMSLKVHSLQH), 576–598 (FRCENCNERFQYKYQLRSHMSIH), 604–626 (FMCQWCGKDFNMKQYFDEHMKTH), 632–654 (YICEICGKSFTSRPNMKRHRRTH), and 660–687 (YPCDVCGQRFRFSNMLKAHKEKCFRVSH). The interval 694-747 (VPAAPGLPPTQPQAHALPLLPGLPQTLPPPPHLPPPPPLFPTTASPGGRMNANN) is disordered. Positions 719–733 (TLPPPPHLPPPPPLF) are enriched in pro residues.

It belongs to the krueppel C2H2-type zinc-finger protein family.

It is found in the nucleus. In terms of biological role, may be involved in transcriptional regulation. In Homo sapiens (Human), this protein is Zinc finger and BTB domain-containing protein 47 (ZBTB47).